The sequence spans 471 residues: Methylenetetrahydrofolate--tRNA-(uracil-5-)-methyltransferase TrmFO (471 aa).

G13 to G18 provides a ligand contact to FAD.

This sequence belongs to the MnmG family. TrmFO subfamily. FAD serves as cofactor.

It is found in the cytoplasm. It catalyses the reaction uridine(54) in tRNA + (6R)-5,10-methylene-5,6,7,8-tetrahydrofolate + NADH + H(+) = 5-methyluridine(54) in tRNA + (6S)-5,6,7,8-tetrahydrofolate + NAD(+). The catalysed reaction is uridine(54) in tRNA + (6R)-5,10-methylene-5,6,7,8-tetrahydrofolate + NADPH + H(+) = 5-methyluridine(54) in tRNA + (6S)-5,6,7,8-tetrahydrofolate + NADP(+). Its function is as follows. Catalyzes the folate-dependent formation of 5-methyl-uridine at position 54 (M-5-U54) in all tRNAs. The sequence is that of Methylenetetrahydrofolate--tRNA-(uracil-5-)-methyltransferase TrmFO from Azorhizobium caulinodans (strain ATCC 43989 / DSM 5975 / JCM 20966 / LMG 6465 / NBRC 14845 / NCIMB 13405 / ORS 571).